Consider the following 499-residue polypeptide: Citrinin biosynthesis cluster MFS transporter mrr1 (499 aa).

The segment at 1-29 (MKEEIDAPVSTDASGTDLENARDQPSGEK) is disordered. Helical transmembrane passes span 58-78 (SLITCIFSTLTIWVTFSSSVF), 95-115 (VMTLGTSLTVLGFTVGPLVWG), 124-144 (LKPLYIGYAIFIIFQVPVAVA), 155-175 (FFLGFFGTSALAIIPGALADF), 187-207 (LFSAATFVGPIFGPIIGGFIV), 215-235 (WTAWITMIPASFFGIIAFLTL), 291-311 (ILVCMTIYISLIYGILYLFFV), and 327-347 (GIAALPFLGILVGVLMGCLLV). N-linked (GlcNAc...) asparagine glycosylation is present at Asn-361. 4 helical membrane passes run 370–390 (LPPMIVAAILLPIGLFWFGWT), 395–415 (ISWAPQAIAGAPIGMGILMIW), 443–463 (AVGAAFPLFATAMYHKLGVDW), and 467–487 (LLGFLSIAMIPIPVIFYFYGA).

The protein belongs to the major facilitator superfamily. CAR1 family.

It is found in the membrane. Functionally, MFS transporter; part of the gene cluster that mediates the biosynthesis the mycotoxin citrinin, a hepato-nephrotoxic compound to humans due to inhibition of respiration complex III. This is Citrinin biosynthesis cluster MFS transporter mrr1 from Monascus ruber (Mold).